Consider the following 486-residue polypeptide: Zinc finger chaperone ZPR1 (486 aa).

A disordered region spans residues M1–N31. The residue at position 23 (S23) is a Phosphoserine. 2 C4-type zinc fingers span residues C54–C86 and C295–C327. T407 carries the phosphothreonine modification.

It belongs to the ZPR1 family. As to quaternary structure, interacts with elongation factor 1-alpha.

The protein localises to the cytoplasm. Its subcellular location is the nucleus. Its function is as follows. Acts as a protein folding chaperone for elongation factor 1-alpha. The polypeptide is Zinc finger chaperone ZPR1 (Saccharomyces cerevisiae (strain ATCC 204508 / S288c) (Baker's yeast)).